A 309-amino-acid chain; its full sequence is L-aminoadipate-semialdehyde dehydrogenase-phosphopantetheinyl transferase (309 aa).

CoA contacts are provided by residues arginine 47, 86–91, and 108–111; these read RTSKGK and NISH. 2 residues coordinate Mg(2+): aspartate 129 and glutamate 181. Position 181-185 (181-185) interacts with CoA; the sequence is ESFIK.

It belongs to the P-Pant transferase superfamily. AcpS family. As to quaternary structure, monomer. The cofactor is Mg(2+).

It is found in the cytoplasm. It localises to the cytosol. The catalysed reaction is apo-[ACP] + CoA = holo-[ACP] + adenosine 3',5'-bisphosphate + H(+). It catalyses the reaction apo-[ACP] + acetyl-CoA = acetyl-[ACP] + adenosine 3',5'-bisphosphate + H(+). In terms of biological role, catalyzes the post-translational modification of target proteins by phosphopantetheine. Can transfer the 4'-phosphopantetheine moiety from coenzyme A, regardless of whether the CoA is presented in the free thiol form or as an acetyl thioester, to a serine residue of a broad range of acceptors including the acyl carrier domain of FASN. This is L-aminoadipate-semialdehyde dehydrogenase-phosphopantetheinyl transferase (Aasdhppt) from Mus musculus (Mouse).